The primary structure comprises 313 residues: MMRRTLLHSFATLLLSLSLWSAAVMAAVTTQVTVVTNVAGALVTETTIWDPATAAAAATTTAQTGFFTTVFTTTNDVGTTVTLTQTVNRATMLPTTTTSTSSTGKTTTTVPTATSSLSSGLYLSTVTTTNDLGTTVTLTQTFTHSSTSATSSASSSVSSSVSSSGSSSSVKTTTSTGSAVAETGTRPDPSTDFTEPPVSAVTSLSIDSYITITEGTTSTYTTTRAPTSMWVTVVRQGNTITVQTTFVQRFSSQYVTVASPSVGSIGMGTLTGTVGVIKSAIKKTVSHNEAQHLGMSSFTSILGGLLTVLIWFL.

Residues 1 to 26 form the signal peptide; sequence MMRRTLLHSFATLLLSLSLWSAAVMA. The stretch at 72-86 is repeat 1; the sequence is TTTNDVGTTVTLTQT. Positions 72 to 141 are 2 X approximate repeats; the sequence is TTTNDVGTTV…LGTTVTLTQT (70 aa). Positions 94 to 114 are disordered; sequence PTTTTSTSSTGKTTTTVPTAT. Copy 2 of the repeat occupies 127–141; the sequence is TTTNDLGTTVTLTQT. A compositionally biased stretch (low complexity) spans 147-181; it reads TSATSSASSSVSSSVSSSGSSSSVKTTTSTGSAVA. Residues 147-198 form a disordered region; that stretch reads TSATSSASSSVSSSVSSSGSSSSVKTTTSTGSAVAETGTRPDPSTDFTEPPV. A lipid anchor (GPI-anchor amidated asparagine) is attached at Asn288. Positions 289–313 are cleaved as a propeptide — removed in mature form; the sequence is EAQHLGMSSFTSILGGLLTVLIWFL.

Belongs to the KRE1 family. Post-translationally, extensively modified; probably through addition of O-linked mannose residues. The GPI-anchor is attached to the protein in the endoplasmic reticulum and serves to target the protein to the cell surface. There, the glucosamine-inositol phospholipid moiety is cleaved off and the GPI-modified mannoprotein is covalently attached via its lipidless GPI glycan remnant to the 1,6-beta-glucan of the outer cell wall layer.

The protein localises to the cell membrane. Its subcellular location is the secreted. It localises to the cell wall. Involved in a late stage of cell wall 1,6-beta-glucan synthesis and assembly. Has a structural, rather than enzymic, function within cell wall 1,6-beta-glucan assembly and architecture, possibly by being involved in covalently cross-linking 1,6-beta-glucans to other cell wall components such as 1,3-beta-glucan, chitin and certain mannoproteins. Acts as the plasma membrane receptor for the yeast K1 viral toxin. The sequence is that of Protein KRE1 (KRE1) from Saccharomyces cerevisiae (strain ATCC 204508 / S288c) (Baker's yeast).